The sequence spans 123 residues: S-adenosylmethionine decarboxylase proenzyme 2 (123 aa).

The active-site Schiff-base intermediate with substrate; via pyruvic acid is Ser-65. Pyruvic acid (Ser); by autocatalysis is present on Ser-65. Residue His-70 is the Proton acceptor; for processing activity of the active site. The active-site Proton donor; for catalytic activity is the Cys-85.

The protein belongs to the prokaryotic AdoMetDC family. Type 1 subfamily. As to quaternary structure, heterotetramer of two alpha and two beta chains arranged as a dimer of alpha/beta heterodimers. It depends on pyruvate as a cofactor. Is synthesized initially as an inactive proenzyme. Formation of the active enzyme involves a self-maturation process in which the active site pyruvoyl group is generated from an internal serine residue via an autocatalytic post-translational modification. Two non-identical subunits are generated from the proenzyme in this reaction, and the pyruvate is formed at the N-terminus of the alpha chain, which is derived from the carboxyl end of the proenzyme. The post-translation cleavage follows an unusual pathway, termed non-hydrolytic serinolysis, in which the side chain hydroxyl group of the serine supplies its oxygen atom to form the C-terminus of the beta chain, while the remainder of the serine residue undergoes an oxidative deamination to produce ammonia and the pyruvoyl group blocking the N-terminus of the alpha chain.

It catalyses the reaction S-adenosyl-L-methionine + H(+) = S-adenosyl 3-(methylsulfanyl)propylamine + CO2. It functions in the pathway amine and polyamine biosynthesis; S-adenosylmethioninamine biosynthesis; S-adenosylmethioninamine from S-adenosyl-L-methionine: step 1/1. Catalyzes the decarboxylation of S-adenosylmethionine to S-adenosylmethioninamine (dcAdoMet), the propylamine donor required for the synthesis of the polyamines spermine and spermidine from the diamine putrescine. The protein is S-adenosylmethionine decarboxylase proenzyme 2 of Bacillus cereus (strain ZK / E33L).